An 802-amino-acid polypeptide reads, in one-letter code: Phenylalanine--tRNA ligase beta subunit (802 aa).

Residues 40–155 (SASLKNVVVG…EHVETGVSAI (116 aa)) form the tRNA-binding domain. The region spanning 409–484 (KAVNKIETSL…RIYGYDEIPV (76 aa)) is the B5 domain. Asp-462, Asp-468, Glu-471, and Glu-472 together coordinate Mg(2+). Residues 709–802 (PRYPEMTRDL…LQAKLHAIIR (94 aa)) form the FDX-ACB domain.

This sequence belongs to the phenylalanyl-tRNA synthetase beta subunit family. Type 1 subfamily. As to quaternary structure, tetramer of two alpha and two beta subunits. The cofactor is Mg(2+).

The protein resides in the cytoplasm. The enzyme catalyses tRNA(Phe) + L-phenylalanine + ATP = L-phenylalanyl-tRNA(Phe) + AMP + diphosphate + H(+). This chain is Phenylalanine--tRNA ligase beta subunit, found in Listeria innocua serovar 6a (strain ATCC BAA-680 / CLIP 11262).